The primary structure comprises 523 residues: Ubiquilin (523 aa).

Residues 2 to 77 (VKINIKSSTD…VHLVKGAAPP (76 aa)) enclose the Ubiquitin-like domain. The disordered stretch occupies residues 70 to 99 (LVKGAAPPPPPPVEQQVPTPSNTQPQGIPG). STI1 domains follow at residues 100-135 (VPQN…FRDM) and 139-178 (NPEM…MREM). Positions 215-227 (NQQAASQNQTNSN) are enriched in low complexity. A disordered region spans residues 215-325 (NQQAASQNQT…ASMFGGGGGG (111 aa)). Over residues 228-241 (PIQTNTDANPNSQP) the composition is skewed to polar residues. Over residues 245–278 (PWSTNSSSTSSNPTSSSPSSRPTTGSSTNTGASN) the composition is skewed to low complexity. The span at 285–296 (SGGGGGMGGGTN) shows a compositional bias: gly residues. A compositionally biased stretch (low complexity) spans 297–310 (NTGTNNTGSTNNTG). 2 STI1 domains span residues 339-380 (DPER…RQMM) and 383-415 (NPQL…QQAM). In terms of domain architecture, UBA spans 480–523 (PPEQRFRLQLEQLEELGFVDRAANISALTSTNGNINLAIDRLLR).

Its function is as follows. Stable protein which acts as an antagonist of nosA by repressing cellular differentiation after the tight-aggregate stage, when cells differentiate into two precursor cell types, prespore and prestalk cells, prior to the formation of fruiting bodies. The protein is Ubiquilin (ubqln) of Dictyostelium discoideum (Social amoeba).